The following is a 284-amino-acid chain: MAAKKNKKQKREDYRAAMKQDDVLTMPRKKFYRQRAHANPFSDHQLVYPPHPDQMDWSTLYPAYVAQEESQPEATPSSTTEDLSAPVKVKKLTQDVEVADIGCGFGGLLIALAPVMPQTLVLGLEIRVSVTQFVEDRIKVLRRQNEESKAYQNVSVLRANTMKFLPNFFRQGQLSKIFICFPDPHFKARKHKQRIVSTTLNSEYAYAVRPGGVVYTITDVPDLHGWMVQHFEAHPMFERVGVEEQEGDPCVEIMRNATEEGKKVERNKGEKFVALFRRLEDPVF.

Residues glycine 102, 125-126 (EI), 160-161 (NT), and cysteine 180 contribute to the S-adenosyl-L-methionine site. Aspartate 183 is an active-site residue. 258–260 (TEE) lines the S-adenosyl-L-methionine pocket.

This sequence belongs to the class I-like SAM-binding methyltransferase superfamily. TrmB family. Forms a complex with TRM82.

The protein localises to the nucleus. It carries out the reaction guanosine(46) in tRNA + S-adenosyl-L-methionine = N(7)-methylguanosine(46) in tRNA + S-adenosyl-L-homocysteine. It participates in tRNA modification; N(7)-methylguanine-tRNA biosynthesis. Its function is as follows. Catalyzes the formation of N(7)-methylguanine at position 46 (m7G46) in tRNA. This chain is tRNA (guanine-N(7)-)-methyltransferase, found in Podospora anserina (strain S / ATCC MYA-4624 / DSM 980 / FGSC 10383) (Pleurage anserina).